The sequence spans 193 residues: Xanthine phosphoribosyltransferase (193 aa).

Positions 20 and 27 each coordinate xanthine. Residue 128 to 132 (ANGQA) coordinates 5-phospho-alpha-D-ribose 1-diphosphate. Lys-156 is a binding site for xanthine.

This sequence belongs to the purine/pyrimidine phosphoribosyltransferase family. Xpt subfamily. Homodimer.

It localises to the cytoplasm. The enzyme catalyses XMP + diphosphate = xanthine + 5-phospho-alpha-D-ribose 1-diphosphate. The protein operates within purine metabolism; XMP biosynthesis via salvage pathway; XMP from xanthine: step 1/1. Functionally, converts the preformed base xanthine, a product of nucleic acid breakdown, to xanthosine 5'-monophosphate (XMP), so it can be reused for RNA or DNA synthesis. The chain is Xanthine phosphoribosyltransferase from Streptococcus equi subsp. equi (strain 4047).